Reading from the N-terminus, the 566-residue chain is Mediator of RNA polymerase II transcription subunit 1 (566 aa).

Residue S155 is modified to Phosphoserine. A disordered region spans residues 361 to 425 (TPSSNSNSSE…TNKSKRPSIT (65 aa)). Basic residues predominate over residues 410–421 (RRRRSSTNKSKR). Residue S423 is modified to Phosphoserine.

It belongs to the Mediator complex subunit 1 family. As to quaternary structure, component of the Mediator complex, which is composed of at least 21 subunits that form three structurally distinct submodules. The Mediator head module contains MED6, MED8, MED11, SRB4/MED17, SRB5/MED18, ROX3/MED19, SRB2/MED20 and SRB6/MED22, the middle module contains MED1, MED4, NUT1/MED5, MED7, CSE2/MED9, NUT2/MED10, SRB7/MED21 and SOH1/MED31, and the tail module contains MED2, PGD1/MED3, RGR1/MED14, GAL11/MED15 and SIN4/MED16. The head and the middle modules interact directly with RNA polymerase II, whereas the elongated tail module interacts with gene-specific regulatory proteins. MED1 interacts directly with MED4 and MED7.

It is found in the nucleus. Functionally, component of the Mediator complex, a coactivator involved in the regulated transcription of nearly all RNA polymerase II-dependent genes. Mediator functions as a bridge to convey information from gene-specific regulatory proteins to the basal RNA polymerase II transcription machinery. The Mediator complex, having a compact conformation in its free form, is recruited to promoters by direct interactions with regulatory proteins and serves for the assembly of a functional preinitiation complex with RNA polymerase II and the general transcription factors. The Mediator complex unfolds to an extended conformation and partially surrounds RNA polymerase II, specifically interacting with the unphosphorylated form of the C-terminal domain (CTD) of RNA polymerase II. The Mediator complex dissociates from the RNA polymerase II holoenzyme and stays at the promoter when transcriptional elongation begins. The chain is Mediator of RNA polymerase II transcription subunit 1 (MED1) from Saccharomyces cerevisiae (strain ATCC 204508 / S288c) (Baker's yeast).